We begin with the raw amino-acid sequence, 38 residues long: MTNPNPNKQTVELNRTSLYWGLLLIFVLAVLFSSYIFN.

The chain crosses the membrane as a helical span at residues 17–37 (SLYWGLLLIFVLAVLFSSYIF).

It belongs to the PsbL family. PSII is composed of 1 copy each of membrane proteins PsbA, PsbB, PsbC, PsbD, PsbE, PsbF, PsbH, PsbI, PsbJ, PsbK, PsbL, PsbM, PsbT, PsbX, PsbY, PsbZ, Psb30/Ycf12, at least 3 peripheral proteins of the oxygen-evolving complex and a large number of cofactors. It forms dimeric complexes.

It localises to the plastid. Its subcellular location is the chloroplast thylakoid membrane. In terms of biological role, one of the components of the core complex of photosystem II (PSII). PSII is a light-driven water:plastoquinone oxidoreductase that uses light energy to abstract electrons from H(2)O, generating O(2) and a proton gradient subsequently used for ATP formation. It consists of a core antenna complex that captures photons, and an electron transfer chain that converts photonic excitation into a charge separation. This subunit is found at the monomer-monomer interface and is required for correct PSII assembly and/or dimerization. The protein is Photosystem II reaction center protein L of Ostreococcus tauri.